The primary structure comprises 65 residues: Large ribosomal subunit protein uL29 (65 aa).

The protein belongs to the universal ribosomal protein uL29 family.

This chain is Large ribosomal subunit protein uL29, found in Mycoplasmopsis pulmonis (strain UAB CTIP) (Mycoplasma pulmonis).